Consider the following 348-residue polypeptide: Thioesterase-like protein TwmA (348 aa).

It functions in the pathway secondary metabolite biosynthesis. Thioesterase-like protein; part of the gene cluster that mediates the biosynthesis of wortmanamides A and B, reduced long-chain polyketides amidated with a specific omega-amino acid, 5-aminopentanoic acid (5PA). The PKS modules of TwmB are involved in the synthesis of the polyketide backbone, whereas the non-canonical C domain of TwmB is a bonafide condensation domain that specifically selects 5PA and catalyzes amidation to release polyketide chain. The C domain clearly prefers C16 and C18 fatty acyl substrates, which is consistent with simultaneous formation of both octaketide and nonaketide acyl amides wortmanamides A and B. Because TwmB lacks a designated enoylreductase (ER) domain, the required activity is provided the enoyl reductase TwmE. The roles of the remaining enzymes have still to be clarified. This chain is Thioesterase-like protein TwmA, found in Talaromyces wortmannii (Penicillium wortmannii).